The sequence spans 200 residues: Imidazoleglycerol-phosphate dehydratase (200 aa).

Belongs to the imidazoleglycerol-phosphate dehydratase family.

The protein resides in the cytoplasm. It carries out the reaction D-erythro-1-(imidazol-4-yl)glycerol 3-phosphate = 3-(imidazol-4-yl)-2-oxopropyl phosphate + H2O. It participates in amino-acid biosynthesis; L-histidine biosynthesis; L-histidine from 5-phospho-alpha-D-ribose 1-diphosphate: step 6/9. This chain is Imidazoleglycerol-phosphate dehydratase, found in Chlorobium phaeobacteroides (strain DSM 266 / SMG 266 / 2430).